Reading from the N-terminus, the 374-residue chain is Secondary metabolism regulator laeA (374 aa).

Residues 1–75 are disordered; that stretch reads MFEMGPVGTR…NRNGSPSMSP (75 aa). Over residues 23-40 the composition is skewed to polar residues; sequence SYHSPTSSDRGRSRQNSD. Position 207 is an S-methylmethionine (Met-207).

This sequence belongs to the methyltransferase superfamily. LaeA methyltransferase family. As to quaternary structure, component of the heterotrimeric velvet complex composed of laeA, veA and velB; VeA acting as a bridging protein between laeA and velB. Post-translationally, self-methylates at Met-207.

The protein resides in the nucleus. The catalysed reaction is L-methionyl-[protein] + S-adenosyl-L-methionine = S-methyl-L-methionyl-[protein] + S-adenosyl-L-homocysteine. In terms of biological role, methyltransferase that performs automethylation at Met-207. No other methyl-accepting substrate has been identified yet. Component of the velvet transcription factor complex that acts as a global regulator for secondary metabolite gene expression. Controls the expression of the sterigmatocystin, penicillin, and lovastatin gene clusters. Controls light-dependent formation of the velB-vosA complex, veA protein modification, and is required for light-mediated inhibition of sexual development. Within the velvet complex, controls light-dependent secondary metabolism. Involved in the defense response against Drosophila melanogaster larval grazing. The sequence is that of Secondary metabolism regulator laeA from Emericella nidulans (Aspergillus nidulans).